A 439-amino-acid polypeptide reads, in one-letter code: Secreted aspartic protease FUS4 (439 aa).

The first 22 residues, methionine 1–alanine 22, serve as a signal peptide directing secretion. Residues tyrosine 49–alanine 434 enclose the Peptidase A1 domain. Residues asparagine 52 and asparagine 61 are each glycosylated (N-linked (GlcNAc...) asparagine). Aspartate 67 is an active-site residue. N-linked (GlcNAc...) asparagine glycosylation is found at asparagine 101, asparagine 107, and asparagine 123. Residue aspartate 296 is part of the active site. Cysteines 352 and 390 form a disulfide.

It belongs to the peptidase A1 family.

It is found in the secreted. Secreted aspartic protease; part of the gene cluster that mediates the biosynthesis of the mycotoxin fusarin C. Within the cluster, FUS1, FUS2, FUS8 and FUS9 are sufficient for fusarin production. The other FUS cluster members are not essential for fusarin C biosynthesis. This chain is Secreted aspartic protease FUS4, found in Gibberella moniliformis (strain M3125 / FGSC 7600) (Maize ear and stalk rot fungus).